Here is a 217-residue protein sequence, read N- to C-terminus: MSLGLVGRKVGMTRIFTDDGDSIPVTVLEVGDNRVTQIKTDETDGYTAVQVTFGTRRASRVTKPLAGHLAKAGVEAGEVIKEFRVDAARAAEFQPGANISVDLFEVGQKIDVQGVTIGKGYAGTIKRYNFSSGRASHGNSRSHNVPGSIGMAQDPGRVFPGKRMTGHMGDVTRTVQNLEIAKIDAERKLLLVKGAIPGAKGGQVIVTPAVKARAKKA.

The segment covering 133–145 (GRASHGNSRSHNV) has biased composition (polar residues). A disordered region spans residues 133-153 (GRASHGNSRSHNVPGSIGMAQ). Q153 bears the N5-methylglutamine mark.

It belongs to the universal ribosomal protein uL3 family. As to quaternary structure, part of the 50S ribosomal subunit. Forms a cluster with proteins L14 and L19. Methylated by PrmB.

Functionally, one of the primary rRNA binding proteins, it binds directly near the 3'-end of the 23S rRNA, where it nucleates assembly of the 50S subunit. This Ralstonia pickettii (strain 12J) protein is Large ribosomal subunit protein uL3.